We begin with the raw amino-acid sequence, 123 residues long: Sirohydrochlorin cobaltochelatase (123 aa).

H9 serves as the catalytic Proton acceptor. Position 9 (H9) interacts with Co(2+). Residues E43 and 68–73 each bind substrate; that span reads FAAGMH. H73 provides a ligand contact to Co(2+).

The protein belongs to the CbiX family. CbiXS subfamily. Homotetramer; dimer of dimers.

The catalysed reaction is Co-sirohydrochlorin + 2 H(+) = sirohydrochlorin + Co(2+). The protein operates within cofactor biosynthesis; adenosylcobalamin biosynthesis; cob(II)yrinate a,c-diamide from sirohydrochlorin (anaerobic route): step 1/10. In terms of biological role, catalyzes the insertion of Co(2+) into sirohydrochlorin as part of the anaerobic pathway to cobalamin biosynthesis. The chain is Sirohydrochlorin cobaltochelatase from Sulfolobus acidocaldarius (strain ATCC 33909 / DSM 639 / JCM 8929 / NBRC 15157 / NCIMB 11770).